The chain runs to 80 residues: UPF0125 protein XF_2346 (80 aa).

It belongs to the UPF0125 (RnfH) family.

This Xylella fastidiosa (strain 9a5c) protein is UPF0125 protein XF_2346.